Consider the following 296-residue polypeptide: MTKEKIIVIVGPTAVGKTALGIALAGAFNGEIISGDSQQVYRHLDIGTAKASAREQALAVHHLIDIREVTESYSAFDFVQDAKRAIEDIVSRGKLPIIVGGTGLYLQSLLEGYHLGGDLDQKELLAYRQQLETLTDTELYQLLASKGIHLDQVNRRRAIRSLELNQFARDLENQEAPYNPLIIGLTDEREVIYERINKRVDLMMASGLLEEARWLFEQYPAVQASRGIGYKELFPYFQGQASLEEATATLKQQTRRFAKRQLTWFRNRMAVRFDSISESSYPQAIYDRVERFLKEP.

Residue 11–18 participates in ATP binding; sequence GPTAVGKT. Position 13 to 18 (13 to 18) interacts with substrate; that stretch reads TAVGKT. The segment at 36–39 is interaction with substrate tRNA; it reads DSQQ.

The protein belongs to the IPP transferase family. Monomer. Requires Mg(2+) as cofactor.

The catalysed reaction is adenosine(37) in tRNA + dimethylallyl diphosphate = N(6)-dimethylallyladenosine(37) in tRNA + diphosphate. In terms of biological role, catalyzes the transfer of a dimethylallyl group onto the adenine at position 37 in tRNAs that read codons beginning with uridine, leading to the formation of N6-(dimethylallyl)adenosine (i(6)A). The protein is tRNA dimethylallyltransferase of Streptococcus equi subsp. equi (strain 4047).